The chain runs to 212 residues: MAAVLRAVARSPGPAAWGRPLHRLCCCGGQDPRRWVGSGPPHSKEKPLGPETEKFQMVYRFDAIKAFGYLSRLKVAQTALTVAALPPGLYCYSQGLMPFSSLCLAGGVAGFALAMLCWMSHFFRRLVGILYVNEEGTVLRVAHLTFWGRRQDTYCPVADVIPMTESPDRPQELFMRIQQYSGKQTFYLTLRYGRVLDQERFTQVFGVLDALK.

The Mitochondrial matrix portion of the chain corresponds to 1–78; that stretch reads MAAVLRAVAR…YLSRLKVAQT (78 aa). Residues 79 to 99 form a helical membrane-spanning segment; the sequence is ALTVAALPPGLYCYSQGLMPF. The Mitochondrial intermembrane portion of the chain corresponds to 100–101; it reads SS. A helical membrane pass occupies residues 102–122; sequence LCLAGGVAGFALAMLCWMSHF. The Mitochondrial matrix segment spans residues 123–212; sequence FRRLVGILYV…QVFGVLDALK (90 aa).

Belongs to the TMEM186 family. Part of the mitochondrial complex I assembly/MCIA complex that comprises at least the core subunits TMEM126B, NDUFAF1, ECSIT and ACAD9 and complement subunits such as COA1 and TMEM186. Interacts with MT-ND3.

Its subcellular location is the mitochondrion inner membrane. As part of the MCIA complex, required for efficient assembly of the mitochondrial complex I. The protein is Transmembrane protein 186 of Bos taurus (Bovine).